The chain runs to 698 residues: Polyribonucleotide nucleotidyltransferase (698 aa).

Mg(2+) contacts are provided by Asp-485 and Asp-491. In terms of domain architecture, KH spans 552-612; sequence PRVEMMTIPE…SDLKGAKSIV (61 aa). Residues 622 to 690 form the S1 motif domain; the sequence is GMVYDGTVKK…KLGRLNLSYV (69 aa).

It belongs to the polyribonucleotide nucleotidyltransferase family. Mg(2+) serves as cofactor.

It localises to the cytoplasm. The enzyme catalyses RNA(n+1) + phosphate = RNA(n) + a ribonucleoside 5'-diphosphate. Involved in mRNA degradation. Catalyzes the phosphorolysis of single-stranded polyribonucleotides processively in the 3'- to 5'-direction. The sequence is that of Polyribonucleotide nucleotidyltransferase from Treponema denticola (strain ATCC 35405 / DSM 14222 / CIP 103919 / JCM 8153 / KCTC 15104).